The chain runs to 353 residues: Uroporphyrinogen decarboxylase (353 aa).

Substrate-binding positions include 27–31 (RQAGR), Phe-46, Asp-76, Tyr-152, Ser-207, and His-321.

It belongs to the uroporphyrinogen decarboxylase family. Homodimer.

The protein localises to the cytoplasm. The catalysed reaction is uroporphyrinogen III + 4 H(+) = coproporphyrinogen III + 4 CO2. It participates in porphyrin-containing compound metabolism; protoporphyrin-IX biosynthesis; coproporphyrinogen-III from 5-aminolevulinate: step 4/4. Its function is as follows. Catalyzes the decarboxylation of four acetate groups of uroporphyrinogen-III to yield coproporphyrinogen-III. This is Uroporphyrinogen decarboxylase from Listeria monocytogenes serovar 1/2a (strain ATCC BAA-679 / EGD-e).